Reading from the N-terminus, the 227-residue chain is Ras-related protein Rab-3C (227 aa).

9 residues coordinate GTP: Ser-39, Gly-42, Lys-43, Thr-44, Ser-45, Thr-56, Ser-57, Ser-61, and Thr-62. Position 44 (Thr-44) interacts with Mg(2+). The short motif at 53–66 (DSFTSAFVSTVGID) is the Switch 1 element. Mg(2+) is bound by residues Thr-62 and Asp-85. Phosphothreonine is present on Thr-86. A Switch 2 motif is present at residues 86–104 (TAGQERYRTITTAYYRGAM). GTP contacts are provided by Gly-88, Asn-143, Lys-144, Asp-146, Ala-174, and Lys-175. Ser-196 and Ser-198 each carry phosphoserine. Thr-206 carries the phosphothreonine modification. S-geranylgeranyl cysteine attachment occurs at residues Cys-225 and Cys-227. Cys-227 is modified (cysteine methyl ester).

Belongs to the small GTPase superfamily. Rab family. As to quaternary structure, interacts with RIMS1, RIMS2, RPH3A and RPH3AL. The GTP-bound form interacts with REP15. Interacts with GDI2, CHM and CHML; phosphorylation at Thr-86 disrupts these interactions. Interacts with MADD (via uDENN domain); the GTP-bound form is preferred for interaction. The cofactor is Mg(2+). In terms of processing, phosphorylation of Thr-86 in the switch II region by LRRK2 prevents the association of RAB regulatory proteins, including CHM, CHML and RAB GDP dissociation inhibitor GDI2.

Its subcellular location is the cell membrane. The catalysed reaction is GTP + H2O = GDP + phosphate + H(+). Regulated by guanine nucleotide exchange factors (GEFs) which promote the exchange of bound GDP for free GTP. Regulated by GTPase activating proteins (GAPs) which increase the GTP hydrolysis activity. Inhibited by GDP dissociation inhibitors (GDIs) which prevent Rab-GDP dissociation. The small GTPases Rab are key regulators of intracellular membrane trafficking, from the formation of transport vesicles to their fusion with membranes. Rabs cycle between an inactive GDP-bound form and an active GTP-bound form that is able to recruit to membranes different sets of downstream effectors directly responsible for vesicle formation, movement, tethering and fusion. The polypeptide is Ras-related protein Rab-3C (RAB3C) (Bos taurus (Bovine)).